A 413-amino-acid chain; its full sequence is Eukaryotic initiation factor 4A-9 (413 aa).

A Q motif motif is present at residues 40-68 (HSFDAMGLKENLLRGIYAYGFEKPSAIQQ). Residues 71–241 (IVPFCKGLDV…RKFMNKPVRI (171 aa)) enclose the Helicase ATP-binding domain. Residue 84–91 (AQSGTGKT) coordinates ATP. The DEAD box motif lies at 189-192 (DEAD). The Helicase C-terminal domain maps to 252-413 (GIKQFYVNVD…ELPANVADLL (162 aa)).

Belongs to the DEAD box helicase family. eIF4A subfamily. In terms of assembly, eIF4F is a multi-subunit complex, the composition of which varies with external and internal environmental conditions. It is composed of at least EIF4A, EIF4E and EIF4G.

The enzyme catalyses ATP + H2O = ADP + phosphate + H(+). In terms of biological role, ATP-dependent RNA helicase which is a subunit of the eIF4F complex involved in cap recognition and is required for mRNA binding to ribosome. In the current model of translation initiation, eIF4A unwinds RNA secondary structures in the 5'-UTR of mRNAs which is necessary to allow efficient binding of the small ribosomal subunit, and subsequent scanning for the initiator codon. The sequence is that of Eukaryotic initiation factor 4A-9 from Nicotiana tabacum (Common tobacco).